A 330-amino-acid polypeptide reads, in one-letter code: Phosphate acyltransferase (330 aa).

The protein belongs to the PlsX family. In terms of assembly, homodimer. Probably interacts with PlsY.

It localises to the cytoplasm. The catalysed reaction is a fatty acyl-[ACP] + phosphate = an acyl phosphate + holo-[ACP]. Its pathway is lipid metabolism; phospholipid metabolism. In terms of biological role, catalyzes the reversible formation of acyl-phosphate (acyl-PO(4)) from acyl-[acyl-carrier-protein] (acyl-ACP). This enzyme utilizes acyl-ACP as fatty acyl donor, but not acyl-CoA. In Bacillus thuringiensis (strain Al Hakam), this protein is Phosphate acyltransferase.